We begin with the raw amino-acid sequence, 404 residues long: Cysteine desulfurase IscS (404 aa).

Residues 75-76 (AT), N155, Q183, and 203-205 (SAH) each bind pyridoxal 5'-phosphate. K206 carries the post-translational modification N6-(pyridoxal phosphate)lysine. T243 serves as a coordination point for pyridoxal 5'-phosphate. The Cysteine persulfide intermediate role is filled by C328. [2Fe-2S] cluster is bound at residue C328.

The protein belongs to the class-V pyridoxal-phosphate-dependent aminotransferase family. NifS/IscS subfamily. In terms of assembly, homodimer. Forms a heterotetramer with IscU, interacts with other sulfur acceptors. Pyridoxal 5'-phosphate is required as a cofactor.

It localises to the cytoplasm. It catalyses the reaction (sulfur carrier)-H + L-cysteine = (sulfur carrier)-SH + L-alanine. It functions in the pathway cofactor biosynthesis; iron-sulfur cluster biosynthesis. In terms of biological role, master enzyme that delivers sulfur to a number of partners involved in Fe-S cluster assembly, tRNA modification or cofactor biosynthesis. Catalyzes the removal of elemental sulfur atoms from cysteine to produce alanine. Functions as a sulfur delivery protein for Fe-S cluster synthesis onto IscU, an Fe-S scaffold assembly protein, as well as other S acceptor proteins. The polypeptide is Cysteine desulfurase IscS (Pseudomonas fluorescens (strain ATCC BAA-477 / NRRL B-23932 / Pf-5)).